Consider the following 341-residue polypeptide: Elongation factor G (341 aa).

Belongs to the GTP-binding elongation factor family. EF-G/EF-2 subfamily.

Its subcellular location is the cytoplasm. In terms of biological role, catalyzes the GTP-dependent ribosomal translocation step during translation elongation. During this step, the ribosome changes from the pre-translocational (PRE) to the post-translocational (POST) state as the newly formed A-site-bound peptidyl-tRNA and P-site-bound deacylated tRNA move to the P and E sites, respectively. Catalyzes the coordinated movement of the two tRNA molecules, the mRNA and conformational changes in the ribosome. The protein is Elongation factor G (fus) of Streptomyces ramocissimus.